We begin with the raw amino-acid sequence, 45 residues long: uncharacterized protein (45 aa).

A helical membrane pass occupies residues 10–27 (LLYFVLFVDIYGIFTNNI).

The protein resides in the membrane. This is an uncharacterized protein from Dictyostelium discoideum (Social amoeba).